The chain runs to 81 residues: Insulin (81 aa).

Intrachain disulfides connect Cys7/Cys67, Cys19/Cys80, and Cys66/Cys71. Residues 33 to 58 (DVEQPLVNGPLHGEVGELPFQHEEYQ) constitute a propeptide, c peptide.

Belongs to the insulin family. In terms of assembly, heterodimer of a B chain and an A chain linked by two disulfide bonds.

It localises to the secreted. Functionally, insulin decreases blood glucose concentration. It increases cell permeability to monosaccharides, amino acids and fatty acids. It accelerates glycolysis, the pentose phosphate cycle, and glycogen synthesis in liver. The polypeptide is Insulin (INS) (Anas platyrhynchos (Mallard)).